Consider the following 226-residue polypeptide: Cobalt transport protein CbiM 2 (226 aa).

The next 6 membrane-spanning stretches (helical) occupy residues 6 to 26 (GFLP…VVAY), 43 to 63 (MLLG…MPSV), 75 to 95 (LGAI…VLLF), 107 to 127 (TLGA…AAVF), 135 to 155 (FPFG…TYVT), and 181 to 201 (VFAL…VVVM).

This sequence belongs to the CbiM family. As to quaternary structure, forms an energy-coupling factor (ECF) transporter complex composed of an ATP-binding protein (A component, CbiO), a transmembrane protein (T component, CbiQ) and 2 possible substrate-capture proteins (S components, CbiM and CbiN) of unknown stoichimetry.

It is found in the cell inner membrane. The protein operates within cofactor biosynthesis; adenosylcobalamin biosynthesis. Part of the energy-coupling factor (ECF) transporter complex CbiMNOQ involved in cobalt import. In Pelobacter propionicus (strain DSM 2379 / NBRC 103807 / OttBd1), this protein is Cobalt transport protein CbiM 2.